Here is a 498-residue protein sequence, read N- to C-terminus: POU domain protein 2, isoform A (498 aa).

Low complexity predominate over residues 1 to 30 (MMVLQQQQQQRLWDATTTSNTNTQTQQSAN). A disordered region spans residues 1 to 35 (MMVLQQQQQQRLWDATTTSNTNTQTQQSANVESTP). A phosphoserine mark is found at Ser72, Ser211, Ser215, Ser217, and Ser219. Positions 191–273 (QMKQQQREDP…STPKPTSGLT (83 aa)) are disordered. The span at 207–222 (PLAKSPLRSPSLSPVP) shows a compositional bias: low complexity. A compositionally biased stretch (polar residues) spans 228-251 (QQRTPPNSMTANSLGMSSAVMTPN). Residues 252–270 (TPSMQQQPQLQQSTPKPTS) show a composition bias toward low complexity. Positions 286–360 (EETTDLEELE…LLQKWLEDAD (75 aa)) constitute a POU-specific domain. A DNA-binding region (homeobox) is located at residues 391-450 (RRKKRTSIETTVRTTLEKAFLMNCKPTSEEISQLSERLNMDKEVIRVWFCNRRQKEKRIN).

Belongs to the POU transcription factor family. Class-2 subfamily. In terms of tissue distribution, initial expression in cellular blastoderm stage, then in ectodermal stripes during germband extension. Broad expression in the neuroectoderm followed by limitation to discrete subsets of CNS cells, and expression in specific PNS neurons and support cells.

It localises to the nucleus. In terms of biological role, DNA-binding regulatory protein implicated in early development. Involved in neuronal cell fate decision. May act as an octamer-dependent activator of transcription. Could also play an early role in specific ectodermal cells, and a subsequent role in the embryonic nervous system. The chain is POU domain protein 2, isoform A (pdm2) from Drosophila melanogaster (Fruit fly).